The primary structure comprises 3416 residues: MAKGAVLKGKGGGPPRRVPKETAKKTRQGPGRLPNGLVLMRMMGVLWHMVAGTARNPILKRFWATVPVRQAIAALRKIRKTVGLLLDSLNKRRGKRRSTTGLLTPILLACLATLVFSATVRRERTGNMVIRAEGKDAATQVEVMNGTCTILATDMGSWCDDSIMYECVTIDSGEEPVDVDCFCKGVERVSLEYGRCGKPAGGRNRRSVSIPVHAHSDLTGRGHKWLKGDSVKTHLTRVEGWVWKNKFLTAAFCAVVWMVTDSLPTRFIVITVALCLAPTYATRCTHLQNRDFVSGTQGTTRVSLVLELGGCVTLTAEGKPSVDVWLDDIHQENPAKTREYCLHAKLANSKVAARCPAMGPATLPEEHQASTVCRRDQSDRGWGNHCGLFGKGSIVACAKFSCEAKKKATGYVYDVNKITYVVKVEPHTGDYLAANESHSNRKTASFTTQSEKTILTLGDYGDISLTCRVTSGVDPAQTVVLELDKTAEHLPKAWQVHRDWFEDLSLPWRHGGAQEWNHADRLVEFGEPHAVKMDIFNLGDQTGILLKSLAGVPVANIEGSKYHLQSGHVTCDVGLEKLKMKGMTYTVCEGSKFAWKRPPTDSGHDTVVMEVTYTGSKPCRIPVRAVAHGEPNVNVASLITPNPSMETTGGGFVELQLPPGDNIIYVGELSHQWFQKGSTIGRVLEKTRRGIERLTVVGEHAWDFGSVGGMLSSVGKALHTAFGAAFNTIFGGVGFLPRILLGVALAWLGLNSRNPTLSVGFLITGGLVLTMTLGVGADMGCAIDANRMELRCGEGLVVWREVTDWYDGYAFHPESPSVLAASLKEAYEEGICGIVPQNRLEMAMWRRVEAVLNLALAESDANLTVVVDKRDPSDYRGGKVGTLRRSGKEMKTSWKGWSQSFVWSVPEAPRRFMVGVEGAGECPLDKRRTGVFTVAEFGMGMRTKVFLDLRETASSDCDTGVMGAAVKSGHAVHTDQSLWMRSHRNATGVFISELIVTDLRNCTWPASHTLDNAGVVDSKLFLPAGLAGPRSHYNHIPGYAEQVKGPWSQTPLRVVREPCPGTAVKIDQSCDKRGASLRSTTESGKAIPEWCCRTCELPPVTFRSGTDCWYAMEIRPVHQQGGLVRSMVLADNGAMLSEGGVPGIVAVFVVLELVIRRRPTTGSSVVWCGMVVLGLVVTGLVTIEGLCRYVVAVGILMSMELGPEIVALVLLQAVFDMRTGLLVAFAVKRAYTTREAVATYFLLLVLELGFPEASLSNIWKWADSLAMGALILQACGQEGRTRVGYLLAAMMTQKDMVIIHTGLTIFLSAATAMAVWSMIKGQRDQKGLSWATPLAGLLGGEGVGLRLLAFRKLAERRNRRSFSEPLTVVGVMLTVASGMVRHTSQEALCALVAGAFLLLMMVLGTRKMQLTAEWCGEVEWNPDLVNEGGEVNLKVRQDAMGNLHLTEVEKEERAMALWLLAGLVASAFHWAGILIVLAVWTLFEMLGSGRRSELVFSGQETRTERNRPFEIKDGAYRIYSPGLLWGHRQIGVGYGAKGVLHTMWHVTRGAALVVDEAISGPYWADVREDVVCYGGAWSLESRWRGETVQVHAFPPGRPQETHQCQPGELILENGRKLGAVPIDLSKGTSGSPIINAQGEVVGLYGNGLKTNEAYVSSIAQGEAEKSRPEIPLSVQGTGWMSKGQITVLDMHPGSGKTHRVLPELVRQCADRGMRTLVLAPTRVVLKEMERALAGKKVRFHSPAVEGQTTAGAIVDVMCHATYVHRRLLPQGRQNWEVAIMDEAHWTDPHSIAARGHLYSLAKENRCALVLMTATPPGRGDPFPESNGAIMSEERAIPDGEWREGFDWITEYEGRTAWFVPSISKGGAVARTLRQRGKSVICLNSKTFEKDYLRVREEKPDFVVTTDISEMGANLDVSRVIDGRTNIKPEEVDGKVELTGTRKVTTASAAQRRGRVGRTSGRTDEYIYSGQCDDDDTSLVQWKEAQILLDNITTLRGPVATFYGPEQVKMPEVAGHYRLNEEKRKHFRHLMTQCDFTPWLAWHVATNTSNVLDRSWTWQGPEENAIDGADGDLVRFKTPGGSERVLQPVWKDCRMFREGRDVKDFILYASGRRSVGDVLGGLAGVPGLLRHRCASALDVVYTLLNENPGSRAMRMAERDAPEAFLTIVEVAVLGVATLGILWCFVARASVSRMFLGTVVLFAALFLLWIGGVDYGHMAGIALIFYTLLTVLQPEPGKQRSSDDNRLAYFLLGLFSLAGLVTANEMGMLDKTKADLAGLVWRGEQRHPAWEEWTNVDIQPARSWGTYVLIVSLFTPYMLHQLQTKIQQLVNSSVASGAQAMRDLGGGTPFFGVAGHVIALGVTSLVGATPMSLGLGVALAAFHLAIVASGLEAELTQRAHRVFFSAMVKNPMVDGDVINPFPDGETKPALYERRMSLILAIALCMGSVVLNRTAASMTEAGAVGLAALGQLVHPETETLWTMPMACGMAGLVRGSFWGLLPMGHRLWLRTTGTRRGGAEGETLGDIWKRRLNGCSREEFFQYRRSGVMETERDKARELLKRGETNMGLAVSRGTAKLAWLEERGYATLKGEVVDLGCGRGGWSYYAASRPAVMGVKAYTIGGKGHEVPRLITSLGWNLIKFRTGMDVYSLEAHRADTILCDIGESSPDPLAEGERSRRVILLMEKWKLRNPDASCVFKVLAPYRPEVLEALHRFQLQWGGGLVRVPFSRNSTHEMYFSTAISGNIINSVNTQSRKLLARFGDQRGPTKVPEVDLGTGTRCVVLAEDKVREADVAERIAALKTQYGDSWHVDKEHPYRTWQYWGSYKTEATGSAASLINGVVKLLSWPWNAREDVVRMAMTDTTAFGQQRVFKEKVDTKAQEPQVGTKIIMRAVNDWIFERLAGKKTPRLCTREEFIAKVRSNAALGAWSDEQNRWPNAREAVEDPEFWRLVDEERERHLGGRCAQCVYNMMGKREKKLGEFGVAKGSRAIWYMWLGSRYLEFEALGFLNEDHWASRDLSGAGVEGTSLNYLGWHLKKLSELEGGLFYADDTAGWDTRITNADLEDEEQILRYLEGEHRTLAKTILEKAYHAKVVKVARPSSSGGCVMDIITRRDQRGSGQVVTYALNTLTNIKVQLIRMMEGEGVIGPSDSQDPRLLRVEAWLKEHGEERLTRMLVSGDDCVVRPIDDRFGKALYFLNDMAKVRKDIGEWEPSEGYSSWEEVPFCSHHFHELTMKDGRVIIVPCRDQDELVGRARVSPGCGWSVRETACLSKAYGQMWLLSYFHRRDLRTLGLAICSAVPIDWVPQGRTTWSIHASGAWMTTEDMLEVWNRVWILDNPFMGDKGKVREWRDIPYLPKSQDGLCSSLVGRRERAEWAKNIWGSVEKVRRMIGPERYADYLSCMDRHELHWDLKLESNII.

Positions 1 to 34 (MAKGAVLKGKGGGPPRRVPKETAKKTRQGPGRLP) are disordered. At 1–99 (MAKGAVLKGK…NKRRGKRRST (99 aa)) the chain is on the cytoplasmic side. The propeptide at 97–117 (RSTTGLLTPILLACLATLVFS) is ER anchor for the capsid protein C, removed in mature form by serine protease NS3. The chain crosses the membrane as a helical span at residues 100–120 (TGLLTPILLACLATLVFSATV). Residues 121 to 243 (RRERTGNMVI…HLTRVEGWVW (123 aa)) are Extracellular-facing. Asn-145 carries an N-linked (GlcNAc...) asparagine; by host glycan. Residues 244 to 261 (KNKFLTAAFCAVVWMVTD) form a helical membrane-spanning segment. Residue Ser-262 is a topological domain, cytoplasmic. Residues 263–281 (LPTRFIVITVALCLAPTYA) form a helical membrane-spanning segment. Topologically, residues 282–728 (TRCTHLQNRD…HTAFGAAFNT (447 aa)) are extracellular. 6 cysteine pairs are disulfide-bonded: Cys-284–Cys-311, Cys-341–Cys-397, Cys-341–Cys-402, Cys-355–Cys-386, Cys-373–Cys-397, and Cys-373–Cys-402. The tract at residues 379-392 (DRGWGNHCGLFGKG) is fusion peptide. An N-linked (GlcNAc...) asparagine; by host glycan is attached at Asn-435. 2 disulfide bridges follow: Cys-467-Cys-571 and Cys-588-Cys-619. The helical transmembrane segment at 729–749 (IFGGVGFLPRILLGVALAWLG) threads the bilayer. Residues 750–756 (LNSRNPT) lie on the Cytoplasmic side of the membrane. A helical transmembrane segment spans residues 757 to 777 (LSVGFLITGGLVLTMTLGVGA). Topologically, residues 778–1134 (DMGCAIDANR…RSMVLADNGA (357 aa)) are extracellular. 6 cysteine pairs are disulfide-bonded: Cys-781–Cys-792, Cys-832–Cys-922, Cys-957–Cys-1002, Cys-1059–Cys-1108, Cys-1070–Cys-1092, and Cys-1091–Cys-1095. Asn-862, Asn-985, and Asn-1001 each carry an N-linked (GlcNAc...) asparagine; by host glycan. The helical transmembrane segment at 1135–1155 (MLSEGGVPGIVAVFVVLELVI) threads the bilayer. Residues 1156 to 1164 (RRRPTTGSS) are Lumenal-facing. A helical membrane pass occupies residues 1165-1185 (VVWCGMVVLGLVVTGLVTIEG). Over 1186-1189 (LCRY) the chain is Cytoplasmic. A helical membrane pass occupies residues 1190–1210 (VVAVGILMSMELGPEIVALVL). The Lumenal portion of the chain corresponds to 1211–1235 (LQAVFDMRTGLLVAFAVKRAYTTRE). Residues 1236 to 1256 (AVATYFLLLVLELGFPEASLS) form a helical membrane-spanning segment. The Cytoplasmic segment spans residues 1257–1295 (NIWKWADSLAMGALILQACGQEGRTRVGYLLAAMMTQKD). A helical membrane pass occupies residues 1296 to 1316 (MVIIHTGLTIFLSAATAMAVW). At 1317-1361 (SMIKGQRDQKGLSWATPLAGLLGGEGVGLRLLAFRKLAERRNRRS) the chain is on the lumenal side. The helical transmembrane segment at 1362–1379 (FSEPLTVVGVMLTVASGM) threads the bilayer. The Cytoplasmic portion of the chain corresponds to 1380–1384 (VRHTS). Residues 1385–1405 (QEALCALVAGAFLLLMMVLGT) traverse the membrane as a helical segment. Residues 1406–1456 (RKMQLTAEWCGEVEWNPDLVNEGGEVNLKVRQDAMGNLHLTEVEKEERAMA) lie on the Lumenal side of the membrane. The interacts with and activates NS3 protease stretch occupies residues 1412 to 1451 (AEWCGEVEWNPDLVNEGGEVNLKVRQDAMGNLHLTEVEKE). Positions 1457–1477 (LWLLAGLVASAFHWAGILIVL) form an intramembrane region, helical. The Lumenal portion of the chain corresponds to 1478-2162 (AVWTLFEMLG…RMAERDAPEA (685 aa)). The Peptidase S7 domain maps to 1492-1671 (SELVFSGQET…EAEKSRPEIP (180 aa)). Active-site charge relay system; for serine protease NS3 activity residues include His-1545, Asp-1569, and Ser-1629. Residues 1677 to 1833 (TGWMSKGQIT…ESNGAIMSEE (157 aa)) form the Helicase ATP-binding domain. 1690-1697 (MHPGSGKT) lines the ATP pocket. The DEAH box signature appears at 1781-1784 (DEAH). In terms of domain architecture, Helicase C-terminal spans 1844–2002 (GFDWITEYEG…TLRGPVATFY (159 aa)). Lys-1885 bears the N6-acetyllysine; by host mark. The chain crosses the membrane as a helical span at residues 2163 to 2183 (FLTIVEVAVLGVATLGILWCF). Residues 2184–2191 (VARASVSR) lie on the Cytoplasmic side of the membrane. The segment at residues 2192–2211 (MFLGTVVLFAALFLLWIGGV) is an intramembrane region (helical). Residue Asp-2212 is a topological domain, lumenal. Residues 2213–2233 (YGHMAGIALIFYTLLTVLQPE) form a helical membrane-spanning segment. The Cytoplasmic segment spans residues 2234-2246 (PGKQRSSDDNRLA). The helical transmembrane segment at 2247–2267 (YFLLGLFSLAGLVTANEMGML) threads the bilayer. Residues 2268–2301 (DKTKADLAGLVWRGEQRHPAWEEWTNVDIQPARS) are Lumenal-facing. The segment at residues 2302 to 2322 (WGTYVLIVSLFTPYMLHQLQT) is an intramembrane region (helical). At 2323-2345 (KIQQLVNSSVASGAQAMRDLGGG) the chain is on the lumenal side. The helical intramembrane region spans 2346–2366 (TPFFGVAGHVIALGVTSLVGA). Residues 2367–2368 (TP) lie on the Lumenal side of the membrane. A helical membrane pass occupies residues 2369 to 2389 (MSLGLGVALAAFHLAIVASGL). The Cytoplasmic segment spans residues 2390–2432 (EAELTQRAHRVFFSAMVKNPMVDGDVINPFPDGETKPALYERR). A helical transmembrane segment spans residues 2433 to 2453 (MSLILAIALCMGSVVLNRTAA). At 2454–2476 (SMTEAGAVGLAALGQLVHPETET) the chain is on the lumenal side. Residues 2477–2497 (LWTMPMACGMAGLVRGSFWGL) traverse the membrane as a helical segment. The Cytoplasmic portion of the chain corresponds to 2498–3416 (LPMGHRLWLR…WDLKLESNII (919 aa)). One can recognise an mRNA cap 0-1 NS5-type MT domain in the interval 2514–2778 (GGAEGETLGD…EVDLGTGTRC (265 aa)). Ser-2569 lines the S-adenosyl-L-methionine pocket. Position 2569 is a phosphoserine (Ser-2569). Lys-2574 functions as the For 2'-O-MTase activity in the catalytic mechanism. Residues Gly-2599, Trp-2600, Thr-2617, Ile-2618, Asp-2644, and Val-2645 each coordinate S-adenosyl-L-methionine. Catalysis depends on Asp-2659, which acts as the For 2'-O-MTase activity. An S-adenosyl-L-methionine-binding site is contributed by Ile-2660. Catalysis depends on for 2'-O-MTase activity residues Lys-2696 and Glu-2732. Residues 2732 to 2736 (EMYFS) are interaction with host SCRIB. Tyr-2734 lines the S-adenosyl-L-methionine pocket. 4 residues coordinate Zn(2+): Glu-2952, His-2956, Cys-2961, and Cys-2964. Residues 3042-3191 (GLFYADDTAG…RPIDDRFGKA (150 aa)) enclose the RdRp catalytic domain. Residues His-3226, Cys-3242, and Cys-3361 each coordinate Zn(2+).

It in the N-terminal section; belongs to the class I-like SAM-binding methyltransferase superfamily. mRNA cap 0-1 NS5-type methyltransferase family. Homodimer. Interacts (via N-terminus) with host EXOC1 (via C-terminus); this interaction results in EXOC1 degradation through the proteasome degradation pathway. As to quaternary structure, forms heterodimers with envelope protein E in the endoplasmic reticulum and Golgi. In terms of assembly, homodimer; in the endoplasmic reticulum and Golgi. Interacts with protein prM. Interacts with non-structural protein 1. Homodimer; Homohexamer when secreted. Interacts with envelope protein E. NS1 interacts with NS4B. Interacts with host complement protein CFH; this interaction leads to the degradation of C3. As to quaternary structure, interacts (via N-terminus) with serine protease NS3. In terms of assembly, forms a heterodimer with serine protease NS3. May form homooligomers. Forms a heterodimer with NS2B. Interacts with non-structural protein 2A (via N-terminus). Interacts with NS4B. Interacts with unphosphorylated RNA-directed RNA polymerase NS5; this interaction stimulates RNA-directed RNA polymerase NS5 guanylyltransferase activity. As to quaternary structure, interacts with serine protease NS3. In terms of assembly, homodimer. Interacts with host STAT2; this interaction inhibits the phosphorylation of the latter, and, when all viral proteins are present (polyprotein), targets STAT2 for degradation. Interacts with serine protease NS3. Specific enzymatic cleavages in vivo yield mature proteins. Cleavages in the lumen of endoplasmic reticulum are performed by host signal peptidase, whereas cleavages in the cytoplasmic side are performed by serine protease NS3. Signal cleavage at the 2K-4B site requires a prior NS3 protease-mediated cleavage at the 4A-2K site. Post-translationally, cleaved in post-Golgi vesicles by a host furin, releasing the mature small envelope protein M, and peptide pr. This cleavage is incomplete as up to 30% of viral particles still carry uncleaved prM. In terms of processing, N-glycosylated. N-glycosylated. The excreted form is glycosylated and this is required for efficient secretion of the protein from infected cells. Post-translationally, acetylated by host KAT5. Acetylation modulates NS3 RNA-binding and unwinding activities and plays an important positive role for viral replication. In terms of processing, phosphorylated on serines residues. This phosphorylation may trigger NS5 nuclear localization.

It localises to the virion. The protein localises to the host nucleus. It is found in the host cytoplasm. Its subcellular location is the host perinuclear region. The protein resides in the secreted. It localises to the virion membrane. The protein localises to the host endoplasmic reticulum membrane. It carries out the reaction Selective hydrolysis of -Xaa-Xaa-|-Yaa- bonds in which each of the Xaa can be either Arg or Lys and Yaa can be either Ser or Ala.. It catalyses the reaction RNA(n) + a ribonucleoside 5'-triphosphate = RNA(n+1) + diphosphate. The catalysed reaction is a ribonucleoside 5'-triphosphate + H2O = a ribonucleoside 5'-diphosphate + phosphate + H(+). The enzyme catalyses ATP + H2O = ADP + phosphate + H(+). It carries out the reaction a 5'-end (5'-triphosphoguanosine)-ribonucleoside in mRNA + S-adenosyl-L-methionine = a 5'-end (N(7)-methyl 5'-triphosphoguanosine)-ribonucleoside in mRNA + S-adenosyl-L-homocysteine. It catalyses the reaction a 5'-end (N(7)-methyl 5'-triphosphoguanosine)-ribonucleoside in mRNA + S-adenosyl-L-methionine = a 5'-end (N(7)-methyl 5'-triphosphoguanosine)-(2'-O-methyl-ribonucleoside) in mRNA + S-adenosyl-L-homocysteine + H(+). Its function is as follows. Plays a role in virus budding by binding to the cell membrane and gathering the viral RNA into a nucleocapsid that forms the core of a mature virus particle. During virus entry, may induce genome penetration into the host cytoplasm after hemifusion induced by the surface proteins. Can migrate to the cell nucleus where it modulates host functions. In terms of biological role, inhibits RNA silencing by interfering with host Dicer. Prevents premature fusion activity of envelope proteins in trans-Golgi by binding to envelope protein E at pH6.0. After virion release in extracellular space, gets dissociated from E dimers. Functionally, acts as a chaperone for envelope protein E during intracellular virion assembly by masking and inactivating envelope protein E fusion peptide. prM is the only viral peptide matured by host furin in the trans-Golgi network probably to avoid catastrophic activation of the viral fusion activity in acidic Golgi compartment prior to virion release. prM-E cleavage is inefficient, and many virions are only partially matured. These uncleaved prM would play a role in immune evasion. Its function is as follows. May play a role in virus budding. Exerts cytotoxic effects by activating a mitochondrial apoptotic pathway through M ectodomain. May display a viroporin activity. In terms of biological role, binds to host cell surface receptor and mediates fusion between viral and cellular membranes. Envelope protein is synthesized in the endoplasmic reticulum in the form of heterodimer with protein prM. They play a role in virion budding in the ER, and the newly formed immature particle is covered with 60 spikes composed of heterodimer between precursor prM and envelope protein E. The virion is transported to the Golgi apparatus where the low pH causes dissociation of PrM-E heterodimers and formation of E homodimers. prM-E cleavage is inefficient, and many virions are only partially matured. These uncleaved prM would play a role in immune evasion. Involved in immune evasion, pathogenesis and viral replication. Once cleaved off the polyprotein, is targeted to three destinations: the viral replication cycle, the plasma membrane and the extracellular compartment. Essential for viral replication. Required for formation of the replication complex and recruitment of other non-structural proteins to the ER-derived membrane structures. Excreted as a hexameric lipoparticle that plays a role against host immune response. Antagonizing the complement function. Binds to the host macrophages and dendritic cells. Inhibits signal transduction originating from Toll-like receptor 3 (TLR3). Functionally, component of the viral RNA replication complex that functions in virion assembly and antagonizes the host immune response. Its function is as follows. Required cofactor for the serine protease function of NS3. May have membrane-destabilizing activity and form viroporins. In terms of biological role, displays three enzymatic activities: serine protease, NTPase and RNA helicase. NS3 serine protease, in association with NS2B, performs its autocleavage and cleaves the polyprotein at dibasic sites in the cytoplasm: C-prM, NS2A-NS2B, NS2B-NS3, NS3-NS4A, NS4A-2K and NS4B-NS5. NS3 RNA helicase binds RNA and unwinds dsRNA in the 3' to 5' direction. Regulates the ATPase activity of the NS3 helicase activity. NS4A allows NS3 helicase to conserve energy during unwinding. Functionally, functions as a signal peptide for NS4B and is required for the interferon antagonism activity of the latter. Its function is as follows. Induces the formation of ER-derived membrane vesicles where the viral replication takes place. Inhibits interferon (IFN)-induced host STAT1 phosphorylation and nuclear translocation, thereby preventing the establishment of cellular antiviral state by blocking the IFN-alpha/beta pathway. Inhibits STAT2 translocation in the nucleus after IFN-alpha treatment. In terms of biological role, replicates the viral (+) and (-) RNA genome, and performs the capping of genomes in the cytoplasm. NS5 methylates viral RNA cap at guanine N-7 and ribose 2'-O positions. Besides its role in RNA genome replication, also prevents the establishment of cellular antiviral state by blocking the interferon-alpha/beta (IFN-alpha/beta) signaling pathway. Inhibits host TYK2 and STAT2 phosphorylation, thereby preventing activation of JAK-STAT signaling pathway. The polypeptide is Genome polyprotein (Homo sapiens (Human)).